The primary structure comprises 290 residues: Iron-sulfur cluster carrier protein (290 aa).

ATP is bound at residue 47 to 54; that stretch reads GKGGVGKS.

This sequence belongs to the Mrp/NBP35 ATP-binding proteins family. As to quaternary structure, homodimer.

In terms of biological role, binds and transfers iron-sulfur (Fe-S) clusters to target apoproteins. Can hydrolyze ATP. This is Iron-sulfur cluster carrier protein from Methanocaldococcus jannaschii (strain ATCC 43067 / DSM 2661 / JAL-1 / JCM 10045 / NBRC 100440) (Methanococcus jannaschii).